A 722-amino-acid chain; its full sequence is Lysophospholipid acyltransferase 6 (722 aa).

A run of 5 helical transmembrane segments spans residues 25–45 (MVGL…ALFL), 62–84 (LRHT…QQAI), 104–123 (IVQR…VHLM), 180–200 (ALEY…PLVF), and 243–263 (KVVG…IYPV). Residues Asn349 and His381 contribute to the active site. The next 3 helical transmembrane spans lie at 378–398 (AVWH…AVVV), 424–444 (ILTC…FVLL), and 452–472 (LYLR…FILP). Polar residues-rich tracts occupy residues 485–511 (NGNG…STAA) and 549–570 (VEQP…QQQP). Disordered stretches follow at residues 485-582 (NGNG…PTCA) and 650-687 (NGAI…DLHP).

It belongs to the membrane-bound acyltransferase family.

It localises to the endoplasmic reticulum. It is found in the membrane. It carries out the reaction a 1-acyl-sn-glycero-3-phospho-L-serine + an acyl-CoA = a 1,2-diacyl-sn-glycero-3-phospho-L-serine + CoA. The enzyme catalyses 1-(9Z-octadecenoyl)-sn-glycero-3-phospho-L-serine + (9Z)-hexadecenoyl-CoA = 1-(9Z-octadecenoyl)-2-(9Z-hexadecenoyl)-sn-glycero-3-phospho-L-serine + CoA. The catalysed reaction is 1-(9Z-octadecenoyl)-sn-glycero-3-phospho-L-serine + (9Z)-octadecenoyl-CoA = 1,2-di-(9Z)-octadecenoyl-sn-glycero-3-phospho-L-serine + CoA. It catalyses the reaction a 1-acyl-sn-glycero-3-phosphocholine + an acyl-CoA = a 1,2-diacyl-sn-glycero-3-phosphocholine + CoA. It carries out the reaction 1-hexadecanoyl-sn-glycero-3-phosphocholine + (9Z)-octadecenoyl-CoA = 1-hexadecanoyl-2-(9Z-octadecenoyl)-sn-glycero-3-phosphocholine + CoA. The enzyme catalyses (9Z)-hexadecenoyl-CoA + 1-hexadecanoyl-sn-glycero-3-phosphocholine = 1-hexadecanoyl-2-(9Z-hexadecenoyl)-sn-glycero-3-phosphocholine + CoA. The catalysed reaction is a 1-acyl-sn-glycero-3-phosphoethanolamine + an acyl-CoA = a 1,2-diacyl-sn-glycero-3-phosphoethanolamine + CoA. It catalyses the reaction 1-hexadecanoyl-sn-glycero-3-phosphoethanolamine + (9Z)-octadecenoyl-CoA = 1-hexadecanoyl-2-(9Z-octadecenoyl)-sn-glycero-3-phosphoethanolamine + CoA. It carries out the reaction 1-hexadecanoyl-sn-glycero-3-phosphoethanolamine + (9Z,12Z)-octadecadienoyl-CoA = 1-hexadecanoyl-2-(9Z,12Z-octadecadienoyl)-sn-glycero-3-phosphoethanolamine + CoA. The enzyme catalyses 1-hexadecanoyl-sn-glycero-3-phosphoethanolamine + (9Z)-hexadecenoyl-CoA = 1-hexadecanoyl-2-(9Z)-hexadecenoyl-sn-glycero-3-phosphoethanolamine + CoA. The catalysed reaction is 1-(9Z-octadecenoyl)-sn-glycero-3-phospho-(1'-sn-glycerol) + (9Z)-octadecenoyl-CoA = 1,2-di-(9Z-octadecenoyl)-sn-glycero-3-phospho-(1'-sn-glycerol) + CoA. It functions in the pathway lipid metabolism; phospholipid metabolism. Functionally, acyltransferase with broad-specificity, that mediates the acylation of lysophospholipids to produce phospholipids (glycerophospholipids). Converts lysophosphatidylserine (1-acyl-2-hydroxy-sn-glycero-3-phospho-L-serine or LPS) to phosphatidylserine (1,2-diacyl-sn-glycero-3-phospho-L-serine or PS) (LPSAT activity), lysophosphatidylcholine (1-acyl-sn-glycero-3-phosphocholine or LPC) to phosphatidylcholine (1,2-diacyl-sn-glycero-3-phosphocholine or PC) (LPCAT activity), also lysophosphatidylethanolamine (1-acyl-sn-glycero-3-phosphochethanolamine or LPE) to phosphatidylchethanolamine (LPEAT activity) and lysophosphatidylglycerol (1-acyl-2-hydroxy-sn-glycero-3-phospho-(1'-sn-glycerol) or LPG) to phosphatidylglycerol (1,2-diacyl-sn-glycero-3-phospho-(1'-sn-glycerol) or PG) (LPGAT activity). Has a preference for unsaturated fatty acids of at least 16 carbons such as oleoyl-CoA ((9Z)-octadecenoyl-CoA) and palmitoleoyl-CoA ((9Z)-hexadecenoyl-CoA). Glycerophospholipids are important structural and functional components of cellular membrane, acyl-chain remodeling regulates the molecular species distribution of glycerophospholipids which can affect membrane fluidity and curvature. Essential for fertility and viability together with Nessy protein (Nes). This chain is Lysophospholipid acyltransferase 6, found in Drosophila melanogaster (Fruit fly).